Here is a 556-residue protein sequence, read N- to C-terminus: Thermosome subunit beta (556 aa).

The disordered stretch occupies residues 530-556 (LSTDKGDDDGGAGGMGGGMGGGMGGMM). The segment covering 540-556 (GAGGMGGGMGGGMGGMM) has biased composition (gly residues).

The protein belongs to the TCP-1 chaperonin family. In terms of assembly, forms an oligomeric complex of eight-membered rings.

In terms of biological role, molecular chaperone; binds unfolded polypeptides in vitro, and has a weak ATPase activity. This chain is Thermosome subunit beta (thsB), found in Halobacterium salinarum (strain ATCC 700922 / JCM 11081 / NRC-1) (Halobacterium halobium).